A 681-amino-acid polypeptide reads, in one-letter code: Transmembrane protein 168-A (681 aa).

A run of 9 helical transmembrane segments spans residues 16 to 36 (FLRC…CLGM), 47 to 67 (MILV…ILYY), 73 to 93 (SASL…LCFL), 135 to 155 (PVVI…ASIS), 156 to 176 (LVFD…ALII), 184 to 204 (LALP…FQSL), 252 to 272 (FSLF…AFKL), 281 to 301 (VIPG…VFLV), and 346 to 365 (LVLF…WQVA). A glycan (N-linked (GlcNAc...) asparagine) is linked at N517.

Belongs to the TMEM168 family.

The protein resides in the nucleus membrane. Functionally, plays a key role in maintaining the cardiac electrical stability by modulating cell surface expression of SCN5A. In Danio rerio (Zebrafish), this protein is Transmembrane protein 168-A (tmem168a).